A 176-amino-acid polypeptide reads, in one-letter code: HTH-type transcriptional regulator DctR (176 aa).

The 66-residue stretch at 109 to 174 (VPEANVSLSR…ELVRHQHIDY (66 aa)) folds into the HTH luxR-type domain. The H-T-H motif DNA-binding region spans 133–152 (TEDILEKLKISLKTFYCHKH).

Its function is as follows. May act as a transcriptional regulator of dctA. Could be involved in the regulation of the genes coding for the type III secretion system in enterohaemorragic strains. The chain is HTH-type transcriptional regulator DctR (dctR) from Escherichia coli O157:H7.